The chain runs to 81 residues: Small ribosomal subunit protein bS16 (81 aa).

This sequence belongs to the bacterial ribosomal protein bS16 family.

The protein is Small ribosomal subunit protein bS16 of Teredinibacter turnerae (strain ATCC 39867 / T7901).